A 695-amino-acid chain; its full sequence is Probable serine/threonine-protein kinase abkD (695 aa).

Polar residues predominate over residues 105–119; the sequence is TTKPQPCQAKPPSSK. The disordered stretch occupies residues 105–149; that stretch reads TTKPQPCQAKPPSSKQQQQQQQQQQQQQQQQQQQQSKKKTSKDRL. Residues 118–150 are a coiled coil; it reads SKQQQQQQQQQQQQQQQQQQQQSKKKTSKDRLR. A compositionally biased stretch (low complexity) spans 120 to 139; it reads QQQQQQQQQQQQQQQQQQQQ. The helical transmembrane segment at 177–193 threads the bilayer; it reads TIASILAAIALIIYSYE. The region spanning 317–695 is the Protein kinase domain; sequence DFDRLPIAAA…LIKDQMKKLG (379 aa). Residues 323–331 and Lys345 each bind ATP; that span reads IAAASLAQV. Asp477 serves as the catalytic Proton acceptor.

This sequence belongs to the protein kinase superfamily. ADCK protein kinase family.

Its subcellular location is the membrane. This is Probable serine/threonine-protein kinase abkD (abkD) from Dictyostelium discoideum (Social amoeba).